The chain runs to 319 residues: Pantothenate kinase (319 aa).

101–108 (GSVAVGKS) contacts ATP.

The protein belongs to the prokaryotic pantothenate kinase family.

It localises to the cytoplasm. The catalysed reaction is (R)-pantothenate + ATP = (R)-4'-phosphopantothenate + ADP + H(+). The protein operates within cofactor biosynthesis; coenzyme A biosynthesis; CoA from (R)-pantothenate: step 1/5. In Clavibacter sepedonicus (Clavibacter michiganensis subsp. sepedonicus), this protein is Pantothenate kinase.